Consider the following 94-residue polypeptide: Ribonuclease P protein component 1 (94 aa).

It belongs to the eukaryotic/archaeal RNase P protein component 1 family. Consists of a catalytic RNA component and at least 4-5 protein subunits.

It is found in the cytoplasm. It catalyses the reaction Endonucleolytic cleavage of RNA, removing 5'-extranucleotides from tRNA precursor.. Functionally, part of ribonuclease P, a protein complex that generates mature tRNA molecules by cleaving their 5'-ends. In Thermofilum pendens (strain DSM 2475 / Hrk 5), this protein is Ribonuclease P protein component 1.